Reading from the N-terminus, the 217-residue chain is Imidazole glycerol phosphate synthase subunit HisH (217 aa).

The region spanning 1–212 (MLAILDYKAG…YEYCRQSRQE (212 aa)) is the Glutamine amidotransferase type-1 domain. Cys79 (nucleophile) is an active-site residue. Catalysis depends on residues His187 and Glu189.

Heterodimer of HisH and HisF.

It localises to the cytoplasm. It carries out the reaction 5-[(5-phospho-1-deoxy-D-ribulos-1-ylimino)methylamino]-1-(5-phospho-beta-D-ribosyl)imidazole-4-carboxamide + L-glutamine = D-erythro-1-(imidazol-4-yl)glycerol 3-phosphate + 5-amino-1-(5-phospho-beta-D-ribosyl)imidazole-4-carboxamide + L-glutamate + H(+). The catalysed reaction is L-glutamine + H2O = L-glutamate + NH4(+). The protein operates within amino-acid biosynthesis; L-histidine biosynthesis; L-histidine from 5-phospho-alpha-D-ribose 1-diphosphate: step 5/9. Its function is as follows. IGPS catalyzes the conversion of PRFAR and glutamine to IGP, AICAR and glutamate. The HisH subunit catalyzes the hydrolysis of glutamine to glutamate and ammonia as part of the synthesis of IGP and AICAR. The resulting ammonia molecule is channeled to the active site of HisF. The polypeptide is Imidazole glycerol phosphate synthase subunit HisH (Desulfovibrio desulfuricans (strain ATCC 27774 / DSM 6949 / MB)).